The following is a 396-amino-acid chain: 3-amino-4-hydroxybenzoate 2-monooxygenase PtmB3 (396 aa).

FAD is bound by residues A19, E38–Q39, and R112. Y217 serves as the catalytic Proton acceptor. D295 contributes to the FAD binding site. Residues R352–R371 form a disordered region.

It belongs to the 6-hydroxynicotinate 3-monooxygenase family. FAD is required as a cofactor.

The enzyme catalyses 3-amino-4-hydroxybenzoate + NADPH + O2 + H(+) = 3-amino-2,4-dihydroxybenzoate + NADP(+) + H2O. It participates in antibiotic biosynthesis. Functionally, part of a gene cluster involved in the biosynthesis of thioplatensimycin (thioPTM) and platensimycin (PTM), potent and selective inhibitors of bacterial and mammalian fatty acid synthases. Catalyzes the hydroxylation of 3-amino-4-hydroxybenzoate (3,4-AHBA) to 3-amino-2,4-dihydroxybenzoate (3,2,4-ADHBA). This is 3-amino-4-hydroxybenzoate 2-monooxygenase PtmB3 from Streptomyces platensis.